A 292-amino-acid polypeptide reads, in one-letter code: Polyisoprenoid diphosphate/phosphate phosphohydrolase PLPP6 (292 aa).

Disordered stretches follow at residues 1 to 34 (MPSP…SGGG) and 66 to 86 (GSFP…PPED). Residues 1 to 131 (MPSPRRTIEG…SAWGSVRPLM (131 aa)) are Cytoplasmic-facing. Positions 10 to 25 (GRPLGSSGGSSVPGSP) are enriched in low complexity. Phosphoserine is present on residues S24 and S67. The span at 69-79 (PLAASGPAQAA) shows a compositional bias: low complexity. A helical membrane pass occupies residues 132 to 152 (KLLEISGHGIPWLLGTLYCLL). Residues 153-161 (RSDSWAGRE) are Lumenal-facing. The helical transmembrane segment at 162-182 (VLMNLLFALLLDLLLVAVIKG) threads the bilayer. A phosphatase sequence motif I region spans residues 181-189 (KGLVRRRRP). The Cytoplasmic portion of the chain corresponds to 183-225 (LVRRRRPAHNQKDMFFTLSVDRYSFPSGHATRAALVSRFILNH). The segment at 208–211 (PSGH) is phosphatase sequence motif II. The active-site Proton donors is the H211. The chain crosses the membrane as a helical span at residues 226 to 246 (LVLAIPLRVLVVLWAFVLGLS). The phosphatase sequence motif III stretch occupies residues 246-257 (SRVMLGRHNVTD). Residues 247–257 (RVMLGRHNVTD) are Lumenal-facing. H253 serves as the catalytic Nucleophile. A helical membrane pass occupies residues 258-278 (VAFGFFLGYMQYSIVDYCWLS). Over 279 to 292 (PHNVPVLFVLWNQQ) the chain is Cytoplasmic.

It belongs to the PA-phosphatase related phosphoesterase family. Phosphorylation by PKC activates the phosphatase activity towards presqualene diphosphate.

It is found in the endoplasmic reticulum membrane. Its subcellular location is the nucleus envelope. The protein localises to the nucleus inner membrane. The enzyme catalyses presqualene diphosphate + H2O = presqualene phosphate + phosphate + H(+). It catalyses the reaction presqualene phosphate + H2O = presqualene alcohol + phosphate. The catalysed reaction is (2E,6E)-farnesyl diphosphate + H2O = (2E,6E)-farnesyl phosphate + phosphate + H(+). It carries out the reaction (2E,6E)-farnesyl phosphate + H2O = (2E,6E)-farnesol + phosphate. The enzyme catalyses (2E,6E,10E)-geranylgeranyl diphosphate + H2O = (2E,6E,10E)-geranylgeranyl phosphate + phosphate + H(+). It catalyses the reaction (2E,6E,10E)-geranylgeranyl phosphate + H2O = (2E,6E,10E)-geranylgeraniol + phosphate. The catalysed reaction is (2E)-geranyl diphosphate + H2O = (2E)-geranyl phosphate + phosphate + H(+). It carries out the reaction (2E)-geranyl phosphate + H2O = (2E)-geraniol + phosphate. The enzyme catalyses 1,2-dihexadecanoyl-sn-glycero-3-phosphate + H2O = 1,2-dihexadecanoyl-sn-glycerol + phosphate. In terms of biological role, magnesium-independent polyisoprenoid diphosphatase that catalyzes the sequential dephosphorylation of presqualene, farnesyl, geranyl and geranylgeranyl diphosphates. Functions in the innate immune response through the dephosphorylation of presqualene diphosphate which acts as a potent inhibitor of the signaling pathways contributing to polymorphonuclear neutrophils activation. May regulate the biosynthesis of cholesterol and related sterols by dephosphorylating presqualene and farnesyl diphosphate, two key intermediates in this biosynthetic pathway. May also play a role in protein prenylation by acting on farnesyl diphosphate and its derivative geranylgeranyl diphosphate, two precursors for the addition of isoprenoid anchors to membrane proteins. Has a lower activity towards phosphatidic acid (PA), but through phosphatidic acid dephosphorylation may participate in the biosynthesis of phospholipids and triacylglycerols. May also act on ceramide-1-P, lysophosphatidic acid (LPA) and sphing-4-enine 1-phosphate/sphingosine-1-phosphate. The chain is Polyisoprenoid diphosphate/phosphate phosphohydrolase PLPP6 from Mus musculus (Mouse).